The sequence spans 574 residues: Protein OBERON 2 (574 aa).

Composition is skewed to polar residues over residues M1 to P10 and S65 to E76. Residues M1–E76 form a disordered region. Residues L226–T291 form a PHD-type zinc finger. The stretch at K416–N524 forms a coiled coil.

In terms of assembly, self-interacts. Interacts with OBE1, OBE3 and OBE4. Binds to VPg of pea seed borne mosaic virus (PSbMV), turnip mosaic virus (TuMV) and lettuce mosaic virus (LMV), but not with VPg of tobacco etch virus (TEV), cowpea mosaic virus (CPMV), tomato black ring virus (TBRV) and grapevine fan leaf virus (GFLV). As to expression, expressed in roots, seedlings, stems, leaves, flowers and siliques, especially in the vasculature.

Its subcellular location is the nucleus. Probable transcription factor that acts together with OBE1 for the maintenance and/or establishment of both the shoot and root meristems, probably by controlling the expression of the meristem genes such as WUS, PLT1 and PLT2 and of genes required for auxin responses. Promotes cell meristematic activity via the WUSCHEL-CLAVATA pathway. Involved in the development of the basal pole and in auxin-mediated root and vascular development in the embryo. Confers sensitivity to turnip mosaic virus (TuMV) probably by promoting viral movement and multiplication via interaction with TuMV VPg. The protein is Protein OBERON 2 of Arabidopsis thaliana (Mouse-ear cress).